The primary structure comprises 251 residues: Large ribosomal subunit protein uL3 (251 aa).

Glutamine 151 is modified (N5-methylglutamine). Positions 219 to 251 (PGAFRRNGEEAAAAPAAEAPAETPAEEAGQEGA) are disordered. Over residues 228–241 (EAAAAPAAEAPAET) the composition is skewed to low complexity. The segment covering 242–251 (PAEEAGQEGA) has biased composition (acidic residues).

Belongs to the universal ribosomal protein uL3 family. Part of the 50S ribosomal subunit. Forms a cluster with proteins L14 and L19. Post-translationally, methylated by PrmB.

In terms of biological role, one of the primary rRNA binding proteins, it binds directly near the 3'-end of the 23S rRNA, where it nucleates assembly of the 50S subunit. The protein is Large ribosomal subunit protein uL3 of Parvibaculum lavamentivorans (strain DS-1 / DSM 13023 / NCIMB 13966).